The chain runs to 155 residues: CASP-like protein 5B2 (155 aa).

Topologically, residues 1–18 (MWEVAWWRPGTWGGLAMR) are cytoplasmic. The chain crosses the membrane as a helical span at residues 19–39 (VGQVAFAGASIGVMASGAGFA). Residue Asn-40 is glycosylated (N-linked (GlcNAc...) asparagine). Topologically, residues 40-43 (NYTA) are extracellular. A helical transmembrane segment spans residues 44–64 (FCYLIASMGLQSLWSLGLACL). Topologically, residues 65-77 (DVYALTVKRDLNN) are cytoplasmic. A helical membrane pass occupies residues 78–98 (ALLVSLFVIGDWVTALLSFAA). The Extracellular portion of the chain corresponds to 99-128 (SCSAGGVMVLFKRDVLFCRRYPQLPCGRFE). A helical transmembrane segment spans residues 129-149 (LAVALAFLSWALSATSAIIMF). Residues 150 to 155 (CLLAAF) are Cytoplasmic-facing.

This sequence belongs to the Casparian strip membrane proteins (CASP) family. Homodimer and heterodimers.

Its subcellular location is the cell membrane. This chain is CASP-like protein 5B2, found in Oryza sativa subsp. indica (Rice).